The sequence spans 153 residues: UPF0735 ACT domain-containing protein FN1487 (153 aa).

Residues 76 to 152 enclose the ACT domain; the sequence is SLHLSLKDRV…GIADIRITGS (77 aa).

Belongs to the UPF0735 family.

The protein is UPF0735 ACT domain-containing protein FN1487 of Fusobacterium nucleatum subsp. nucleatum (strain ATCC 25586 / DSM 15643 / BCRC 10681 / CIP 101130 / JCM 8532 / KCTC 2640 / LMG 13131 / VPI 4355).